The chain runs to 417 residues: MVILAIGGYDPTSGAGISADIKTAHTLGVYCPTITTSVIPQNNKMVYEKFDLPEENIKNQFKAVFEEFDIEYVKTGVLTKPAIDTLLKYIDKYDLKVICDPVLASTTKFSFVDEKLMEKYIELFNKSFLITPNKEEYKKIMEFIKNNNLMIRNDLYILATGIDDILMKNFKPIKTFKGFRVDKEVHGTGCVYSTAITAFLSKGYDLEEAIKEAKRFVLSSVIYAKKSKFGYNSNPTYINKEKVIKNLSYAIYLLKKMNFTLIPEVGSNIAESLPFPKDFKDVAALTGRIIKNKLGGFYIVGDIEFGASEHIAKIILSASKFNPEIRACMNIKYDGGLIKLLKDKFAVSSFDRKEEPPNVSTMEWGTKIACEKFGGVPDIIYDRGGEGKEPMIRVLGRDAIEVVKKVEVIQKIYNTLM.

Residues 1-235 (MVILAIGGYD…KSKFGYNSNP (235 aa)) are hydroxymethylpyrimidine/phosphomethylpyrimidine kinase. Glutamine 41 is a 4-amino-5-hydroxymethyl-2-methylpyrimidine binding site. Residues 236-417 (TYINKEKVIK…VIQKIYNTLM (182 aa)) are thiamine-phosphate synthase.

It in the N-terminal section; belongs to the ThiD family. In the C-terminal section; belongs to the ThiN family.

It carries out the reaction 4-amino-5-hydroxymethyl-2-methylpyrimidine + ATP = 4-amino-2-methyl-5-(phosphooxymethyl)pyrimidine + ADP + H(+). It catalyses the reaction 4-amino-2-methyl-5-(phosphooxymethyl)pyrimidine + ATP = 4-amino-2-methyl-5-(diphosphooxymethyl)pyrimidine + ADP. The catalysed reaction is 2-[(2R,5Z)-2-carboxy-4-methylthiazol-5(2H)-ylidene]ethyl phosphate + 4-amino-2-methyl-5-(diphosphooxymethyl)pyrimidine + 2 H(+) = thiamine phosphate + CO2 + diphosphate. The enzyme catalyses 2-(2-carboxy-4-methylthiazol-5-yl)ethyl phosphate + 4-amino-2-methyl-5-(diphosphooxymethyl)pyrimidine + 2 H(+) = thiamine phosphate + CO2 + diphosphate. It carries out the reaction 4-methyl-5-(2-phosphooxyethyl)-thiazole + 4-amino-2-methyl-5-(diphosphooxymethyl)pyrimidine + H(+) = thiamine phosphate + diphosphate. It functions in the pathway cofactor biosynthesis; thiamine diphosphate biosynthesis; 4-amino-2-methyl-5-diphosphomethylpyrimidine from 5-amino-1-(5-phospho-D-ribosyl)imidazole. It participates in cofactor biosynthesis; thiamine diphosphate biosynthesis; thiamine phosphate from 4-amino-2-methyl-5-diphosphomethylpyrimidine and 4-methyl-5-(2-phosphoethyl)-thiazole: step 1/1. In terms of biological role, catalyzes the phosphorylation of hydroxymethylpyrimidine phosphate (HMP-P) to HMP-PP, and of HMP to HMP-P. Its function is as follows. Condenses 4-methyl-5-(beta-hydroxyethyl)thiazole monophosphate (THZ-P) and 4-amino-5-hydroxymethyl pyrimidine pyrophosphate (HMP-PP) to form thiamine monophosphate (TMP). The protein is Bifunctional thiamine biosynthesis protein ThiDN (thiDN) of Methanocaldococcus jannaschii (strain ATCC 43067 / DSM 2661 / JAL-1 / JCM 10045 / NBRC 100440) (Methanococcus jannaschii).